Consider the following 279-residue polypeptide: MIVIHSVAQMQQYARERRGDIALVPTMGYLHEGHASLMVEARKRAKYVVASIFVNPTQFGINEDLDSYPRDLEHDKEIAAKAGVDVIFAPTAADMYPDRYQSYLNVEEITVHLCGASRPGHFRGVTTVVAKLFNIVAPKVAFFGKKDFQQLAVIRRMVRDFNFDIEIVGMPIVREKDGLAMSSRNTKLSPAEREKALCLSRSIAAAKAAFRGGERSVAALQKVAAAVIEAENSPLIDYLEFRDQDSLLPLDKADERTLLALAVRVGSVRLIDNSILGED.

27-34 provides a ligand contact to ATP; that stretch reads MGYLHEGH. Catalysis depends on His34, which acts as the Proton donor. Gln58 is a binding site for (R)-pantoate. Residue Gln58 participates in beta-alanine binding. Residue 144 to 147 coordinates ATP; sequence GKKD. Gln150 contacts (R)-pantoate. Residues Val173 and 181–184 contribute to the ATP site; that span reads MSSR.

It belongs to the pantothenate synthetase family. As to quaternary structure, homodimer.

It localises to the cytoplasm. It carries out the reaction (R)-pantoate + beta-alanine + ATP = (R)-pantothenate + AMP + diphosphate + H(+). Its pathway is cofactor biosynthesis; (R)-pantothenate biosynthesis; (R)-pantothenate from (R)-pantoate and beta-alanine: step 1/1. Its function is as follows. Catalyzes the condensation of pantoate with beta-alanine in an ATP-dependent reaction via a pantoyl-adenylate intermediate. In Geobacter sp. (strain M21), this protein is Pantothenate synthetase.